The sequence spans 381 residues: Dof zinc finger protein 2 (381 aa).

The tract at residues 19 to 81 is disordered; the sequence is MLMGANPNPN…ARPQKEKALN (63 aa). Low complexity-rich tracts occupy residues 23–32 and 40–59; these read ANPNPNGSSN and SAAS…AAGA. The segment covering 68-79 has biased composition (basic and acidic residues); the sequence is TERRARPQKEKA. The Dof-type zinc-finger motif lies at 80 to 134; sequence LNCPRCNSTNTKFCYYNNYSLQQPRYFCKTCRRYWTEGGSLRNVPVGGGSRKNKR. Zn(2+) is bound by residues Cys-82, Cys-85, Cys-107, and Cys-110. Residues 329–349 form a disordered region; it reads AGDANSGGDHQYDHGKNQGGG.

It localises to the nucleus. In terms of biological role, transcription factor that may transactivate seed storage protein genes in developing seeds. This chain is Dof zinc finger protein 2, found in Oryza sativa subsp. japonica (Rice).